The chain runs to 289 residues: 2-hydroxy-6-oxononadienedioate/2-hydroxy-6-oxononatrienedioate hydrolase (289 aa).

Histidine 269 functions as the Proton acceptor in the catalytic mechanism.

It belongs to the AB hydrolase superfamily. MhpC family. Homodimer.

It carries out the reaction (2Z,4E)-2-hydroxy-6-oxonona-2,4-dienedioate + H2O = (2Z)-2-hydroxypenta-2,4-dienoate + succinate + H(+). It catalyses the reaction (2Z,4E,7E)-2-hydroxy-6-oxonona-2,4,7-trienedioate + H2O = (2Z)-2-hydroxypenta-2,4-dienoate + fumarate + H(+). It functions in the pathway aromatic compound metabolism; 3-phenylpropanoate degradation. In terms of biological role, catalyzes the cleavage of the C5-C6 bond of 2-hydroxy-6-oxononadienedioate and 2-hydroxy-6-oxononatrienedioate, a dienol ring fission product of the bacterial meta-cleavage pathway for degradation of phenylpropionic acid. The sequence is that of 2-hydroxy-6-oxononadienedioate/2-hydroxy-6-oxononatrienedioate hydrolase from Cupriavidus pinatubonensis (strain JMP 134 / LMG 1197) (Cupriavidus necator (strain JMP 134)).